Here is a 206-residue protein sequence, read N- to C-terminus: 2,3-bisphosphoglycerate-dependent phosphoglycerate mutase (206 aa).

Substrate is bound by residues Arg-9–Asn-16, Thr-22–Gly-23, Arg-61, Glu-88–Tyr-91, Lys-99, Arg-115–Arg-116, and Gly-159–Asn-160. Catalysis depends on His-10, which acts as the Tele-phosphohistidine intermediate. The active-site Proton donor/acceptor is Glu-88.

Belongs to the phosphoglycerate mutase family. BPG-dependent PGAM subfamily. As to quaternary structure, homodimer.

It carries out the reaction (2R)-2-phosphoglycerate = (2R)-3-phosphoglycerate. Its pathway is carbohydrate degradation; glycolysis; pyruvate from D-glyceraldehyde 3-phosphate: step 3/5. Catalyzes the interconversion of 2-phosphoglycerate and 3-phosphoglycerate. The sequence is that of 2,3-bisphosphoglycerate-dependent phosphoglycerate mutase from Brucella melitensis biotype 2 (strain ATCC 23457).